Consider the following 313-residue polypeptide: Protoheme IX farnesyltransferase (313 aa).

The next 8 helical transmembrane spans lie at 34–54, 56–76, 105–125, 128–148, 152–172, 173–193, 237–257, and 291–311; these read VIEL…RGTV, PLLI…ANTL, HALI…WSTT, LSAH…TLLL, TSQN…IGWS, AVTG…FFWT, VLAT…VAIL, and YLAV…PTLL.

This sequence belongs to the UbiA prenyltransferase family. Protoheme IX farnesyltransferase subfamily.

The protein localises to the cell membrane. The enzyme catalyses heme b + (2E,6E)-farnesyl diphosphate + H2O = Fe(II)-heme o + diphosphate. It functions in the pathway porphyrin-containing compound metabolism; heme O biosynthesis; heme O from protoheme: step 1/1. Functionally, converts heme B (protoheme IX) to heme O by substitution of the vinyl group on carbon 2 of heme B porphyrin ring with a hydroxyethyl farnesyl side group. The sequence is that of Protoheme IX farnesyltransferase from Mycolicibacterium gilvum (strain PYR-GCK) (Mycobacterium gilvum (strain PYR-GCK)).